The primary structure comprises 162 residues: Transcription elongation factor GreA (162 aa).

The stretch at Asn-45–Leu-65 forms a coiled coil.

It belongs to the GreA/GreB family.

In terms of biological role, necessary for efficient RNA polymerase transcription elongation past template-encoded arresting sites. The arresting sites in DNA have the property of trapping a certain fraction of elongating RNA polymerases that pass through, resulting in locked ternary complexes. Cleavage of the nascent transcript by cleavage factors such as GreA or GreB allows the resumption of elongation from the new 3'terminus. GreA releases sequences of 2 to 3 nucleotides. In Wolinella succinogenes (strain ATCC 29543 / DSM 1740 / CCUG 13145 / JCM 31913 / LMG 7466 / NCTC 11488 / FDC 602W) (Vibrio succinogenes), this protein is Transcription elongation factor GreA.